The sequence spans 354 residues: Methionine aminotransferase BCAT4 (354 aa).

Residue Lys198 is modified to N6-(pyridoxal phosphate)lysine.

Belongs to the class-IV pyridoxal-phosphate-dependent aminotransferase family. Pyridoxal 5'-phosphate is required as a cofactor. In terms of tissue distribution, mostly expressed in phloem.

Its subcellular location is the cytoplasm. It catalyses the reaction a 2-oxocarboxylate + L-methionine = 4-methylsulfanyl-2-oxobutanoate + an L-alpha-amino acid. Functionally, converts 2-oxo acids to branched-chain amino acids. Shows activity with L-Leu, L-Ile and L-Val as amino donors and alpha-keto-glutarate as an amino acceptor, but no activity for D-isomers of Leu, Ile, Val, Asp, Glu or Ala. Acts on methionine and its derivatives and the corresponding 2-oxo acids. Catalyzes the initial deamination of methionine to 4-methylthio-2-oxobutyrate as well as the transamination of other typical intermediates of the methionine chain elongation pathway. This is Methionine aminotransferase BCAT4 (BCAT4) from Arabidopsis thaliana (Mouse-ear cress).